The following is a 292-amino-acid chain: MPWLQVRLAISPEQAETYEDAFLEVGAVSVTFMDAEDQPIFEPELNTTPLWSHTHLLALFEGGTEAASVLAHMELLTGGPLPEHHSEVIEDQDWERSWMDNFQPMRFGQRLWIVPSWHAAPEPEAVNLLLDPGLAFGTGTHPTTALCLEWLDGQDLKDCNVLDFGCGSGILAIAALLLGAKQAVGTDIDVQALEASRDNAGRNGIADELFPLYLPEQLPQVQADVLVANILAGPLVALAPQLSGLVKSGGRLALSGILAEQGEEVAAAYAQDFDLDPIATLDGWVRITGRRR.

Residues T144, G165, D187, and N229 each coordinate S-adenosyl-L-methionine.

It belongs to the methyltransferase superfamily. PrmA family.

It is found in the cytoplasm. The catalysed reaction is L-lysyl-[protein] + 3 S-adenosyl-L-methionine = N(6),N(6),N(6)-trimethyl-L-lysyl-[protein] + 3 S-adenosyl-L-homocysteine + 3 H(+). Its function is as follows. Methylates ribosomal protein L11. This Pseudomonas fluorescens (strain ATCC BAA-477 / NRRL B-23932 / Pf-5) protein is Ribosomal protein L11 methyltransferase.